The chain runs to 250 residues: 5'-nucleotidase SurE (250 aa).

4 residues coordinate a divalent metal cation: Asp-8, Asp-9, Ser-39, and Asn-91.

This sequence belongs to the SurE nucleotidase family. It depends on a divalent metal cation as a cofactor.

The protein resides in the cytoplasm. It carries out the reaction a ribonucleoside 5'-phosphate + H2O = a ribonucleoside + phosphate. Nucleotidase that shows phosphatase activity on nucleoside 5'-monophosphates. In Shewanella halifaxensis (strain HAW-EB4), this protein is 5'-nucleotidase SurE.